The primary structure comprises 201 residues: Recombination protein RecR (201 aa).

The C4-type zinc-finger motif lies at 59 to 74 (CKICGNIDTENICRIC). One can recognise a Toprim domain in the interval 82-177 (SIIAIVETVA…KISRLASGIP (96 aa)).

This sequence belongs to the RecR family.

In terms of biological role, may play a role in DNA repair. It seems to be involved in an RecBC-independent recombinational process of DNA repair. It may act with RecF and RecO. In Rickettsia massiliae (strain Mtu5), this protein is Recombination protein RecR.